Reading from the N-terminus, the 151-residue chain is Cytochrome c-type biogenesis protein CcmE (151 aa).

At 1-9 the chain is on the cytoplasmic side; that stretch reads MKGLKKKRR. A helical; Signal-anchor for type II membrane protein transmembrane segment spans residues 10 to 30; the sequence is IQIIALAFVALAGSTALIGYA. The Periplasmic segment spans residues 31–151; it reads MRDGINFFRS…FQHTEDQPQG (121 aa). Residues His-123 and Tyr-127 each coordinate heme.

The protein belongs to the CcmE/CycJ family.

It localises to the cell inner membrane. In terms of biological role, heme chaperone required for the biogenesis of c-type cytochromes. Transiently binds heme delivered by CcmC and transfers the heme to apo-cytochromes in a process facilitated by CcmF and CcmH. This Cereibacter sphaeroides (strain ATCC 17029 / ATH 2.4.9) (Rhodobacter sphaeroides) protein is Cytochrome c-type biogenesis protein CcmE.